The following is a 348-amino-acid chain: Lipopolysaccharide heptosyltransferase 2 (348 aa).

The protein belongs to the glycosyltransferase 9 family.

It catalyses the reaction an L-alpha-D-Hep-(1-&gt;5)-[alpha-Kdo-(2-&gt;4)]-alpha-Kdo-(2-&gt;6)-lipid A + ADP-L-glycero-beta-D-manno-heptose = an L-alpha-D-Hep-(1-&gt;3)-L-alpha-D-Hep-(1-&gt;5)-[alpha-Kdo-(2-&gt;4)]-alpha-Kdo-(2-&gt;6)-lipid A + ADP + H(+). It functions in the pathway bacterial outer membrane biogenesis; LPS core biosynthesis. In terms of biological role, glycosyltransferase involved in the biosynthesis of the core oligosaccharide region of lipopolysaccharide (LPS). Catalyzes the addition of the second heptose unit to the heptosyl-Kdo2-lipid A module. In Salmonella typhimurium (strain LT2 / SGSC1412 / ATCC 700720), this protein is Lipopolysaccharide heptosyltransferase 2.